The sequence spans 452 residues: Maltoporin (452 aa).

The N-terminal stretch at 1–25 (MMITLRKLPLAVAVAAGVMSAQAMA) is a signal peptide.

This sequence belongs to the porin LamB (TC 1.B.3) family. Homotrimer formed of three 18-stranded antiparallel beta-barrels, containing three independent channels.

It is found in the cell outer membrane. The enzyme catalyses beta-maltose(in) = beta-maltose(out). Functionally, involved in the transport of maltose and maltodextrins. This is Maltoporin from Salmonella newport (strain SL254).